Reading from the N-terminus, the 211-residue chain is Adenylyl-sulfate kinase (211 aa).

Residue 32-39 coordinates ATP; sequence GLSASGKS. Serine 107 acts as the Phosphoserine intermediate in catalysis.

This sequence belongs to the APS kinase family. Homodimer.

The enzyme catalyses adenosine 5'-phosphosulfate + ATP = 3'-phosphoadenylyl sulfate + ADP + H(+). Its pathway is sulfur metabolism; hydrogen sulfide biosynthesis; sulfite from sulfate: step 2/3. In terms of biological role, catalyzes the synthesis of activated sulfate. In Penicillium chrysogenum (Penicillium notatum), this protein is Adenylyl-sulfate kinase.